The chain runs to 567 residues: Proline--tRNA ligase (567 aa).

This sequence belongs to the class-II aminoacyl-tRNA synthetase family. ProS type 1 subfamily. In terms of assembly, homodimer.

It localises to the cytoplasm. The enzyme catalyses tRNA(Pro) + L-proline + ATP = L-prolyl-tRNA(Pro) + AMP + diphosphate. Functionally, catalyzes the attachment of proline to tRNA(Pro) in a two-step reaction: proline is first activated by ATP to form Pro-AMP and then transferred to the acceptor end of tRNA(Pro). As ProRS can inadvertently accommodate and process non-cognate amino acids such as alanine and cysteine, to avoid such errors it has two additional distinct editing activities against alanine. One activity is designated as 'pretransfer' editing and involves the tRNA(Pro)-independent hydrolysis of activated Ala-AMP. The other activity is designated 'posttransfer' editing and involves deacylation of mischarged Ala-tRNA(Pro). The misacylated Cys-tRNA(Pro) is not edited by ProRS. This is Proline--tRNA ligase from Geobacillus sp. (strain WCH70).